The sequence spans 692 residues: Polyribonucleotide nucleotidyltransferase (692 aa).

Residues aspartate 484 and aspartate 490 each coordinate Mg(2+). One can recognise a KH domain in the interval 551–614 (PKYFIHKISQ…ALVERVKSIT (64 aa)). The region spanning 620 to 688 (GAVYTGKVKT…NRGRIRLSRK (69 aa)) is the S1 motif domain.

Belongs to the polyribonucleotide nucleotidyltransferase family. It depends on Mg(2+) as a cofactor.

The protein resides in the cytoplasm. The enzyme catalyses RNA(n+1) + phosphate = RNA(n) + a ribonucleoside 5'-diphosphate. In terms of biological role, involved in mRNA degradation. Catalyzes the phosphorolysis of single-stranded polyribonucleotides processively in the 3'- to 5'-direction. The protein is Polyribonucleotide nucleotidyltransferase of Desulfotalea psychrophila (strain LSv54 / DSM 12343).